A 177-amino-acid polypeptide reads, in one-letter code: Anti-apoptotic protein NR13 (177 aa).

Positions 75-94 (LEAEGGLNWGRLLALVVFTG) match the BH1 motif. Residues 86 to 106 (LLALVVFTGTLAAALAESGCE) form a helical membrane-spanning segment. A BH2 motif is present at residues 126-141 (EWLEEHGGWDGFCRFF). A helical transmembrane segment spans residues 156-176 (SNAIMAAAGFGIAGLAFLLVV).

This sequence belongs to the Bcl-2 family. As to quaternary structure, interacts with BAX. As to expression, expressed preferentially in heart, skeletal muscle, retina, optical tectum and bursa of Fabricius.

The protein localises to the cell membrane. Shows anti-apoptotic properties. Counteract the pro-apoptotic activity of BAX. The polypeptide is Anti-apoptotic protein NR13 (NR13) (Gallus gallus (Chicken)).